We begin with the raw amino-acid sequence, 295 residues long: Ectoine dioxygenase (295 aa).

An L-ectoine-binding site is contributed by Gln-129. Lys-135 contributes to the 2-oxoglutarate binding site. His-146, Asp-148, and His-247 together coordinate Fe cation.

It belongs to the PhyH family. EctD subfamily. In terms of assembly, homodimer. The cofactor is Fe(2+).

It catalyses the reaction L-ectoine + 2-oxoglutarate + O2 = 5-hydroxyectoine + succinate + CO2. In terms of biological role, involved in the biosynthesis of 5-hydroxyectoine, called compatible solute, which helps organisms to survive extreme osmotic stress by acting as a highly soluble organic osmolyte. Catalyzes the 2-oxoglutarate-dependent selective hydroxylation of L-ectoine to yield (4S,5S)-5-hydroxyectoine. This Streptomyces avermitilis (strain ATCC 31267 / DSM 46492 / JCM 5070 / NBRC 14893 / NCIMB 12804 / NRRL 8165 / MA-4680) protein is Ectoine dioxygenase.